Here is a 336-residue protein sequence, read N- to C-terminus: Protein-glutamate methylesterase/protein-glutamine glutaminase 1 (336 aa).

The 118-residue stretch at 2–119 (KIAIVNDMPM…GNAQEAAAPL (118 aa)) folds into the Response regulatory domain. A 4-aspartylphosphate modification is found at Asp-53. The region spanning 143 to 336 (PLRSGAPRQS…APRLLEIFAK (194 aa)) is the CheB-type methylesterase domain. Active-site residues include Ser-159, His-186, and Asp-279.

It belongs to the CheB family. Post-translationally, phosphorylated by CheA. Phosphorylation of the N-terminal regulatory domain activates the methylesterase activity.

Its subcellular location is the cytoplasm. It carries out the reaction [protein]-L-glutamate 5-O-methyl ester + H2O = L-glutamyl-[protein] + methanol + H(+). The enzyme catalyses L-glutaminyl-[protein] + H2O = L-glutamyl-[protein] + NH4(+). Involved in chemotaxis. Part of a chemotaxis signal transduction system that modulates chemotaxis in response to various stimuli. Catalyzes the demethylation of specific methylglutamate residues introduced into the chemoreceptors (methyl-accepting chemotaxis proteins or MCP) by CheR. Also mediates the irreversible deamidation of specific glutamine residues to glutamic acid. The sequence is that of Protein-glutamate methylesterase/protein-glutamine glutaminase 1 from Pseudomonas fluorescens (strain ATCC BAA-477 / NRRL B-23932 / Pf-5).